The primary structure comprises 421 residues: Atrochrysone carboxyl ACP thioesterase (421 aa).

Zn(2+) is bound by residues His-207, His-209, Asp-211, and His-212. The active-site Proton donor/acceptor is the Asp-211.

Belongs to the metallo-beta-lactamase superfamily. Requires Zn(2+) as cofactor. As to expression, specifically expressed in conidia.

It carries out the reaction atrochrysone carboxyl-[ACP] + H2O = atrochrysone carboxylate + holo-[ACP] + H(+). Its pathway is secondary metabolite biosynthesis. Atrochrysone carboxyl ACP thioesterase; part of the gene cluster that mediates the biosynthesis of trypacidin, a mycotoxin with antiprotozoal activity and that plays a role in the infection process. The pathway begins with the synthesis of atrochrysone thioester by the polyketide synthase (PKS) tpcC. The atrochrysone carboxyl ACP thioesterase tpcB then breaks the thioester bond and releases the atrochrysone carboxylic acid from tpcC. The decarboxylase tpcK converts atrochrysone carboxylic acid to atrochrysone which is further reduced into emodin anthrone. The next step is performed by the emodin anthrone oxygenase tpcL that catalyzes the oxidation of emodin anthrone to emodin. Emodin O-methyltransferase encoded by tpcA catalyzes methylation of the 8-hydroxy group of emodin to form questin. Ring cleavage of questin by questin oxidase tpcI leads to desmethylsulochrin via several intermediates including questin epoxide. Another methylation step catalyzed by tpcM leads to the formation of sulochrin which is further converted to monomethylsulfochrin by tpcH. Finally, the tpcJ catalyzes the conversion of monomethylsulfochrin to trypacidin. Trypacidin is toxic for human pulmonary and bronchial epithelial cells by initiating the intracellular formation of nitric oxide (NO) and hydrogen peroxide (H(2)O(2)), thus triggering host necrotic cell death. The trypacidin pathway is also able to produce endocrocin via a distinct route from the endocrocin Enc pathway. The chain is Atrochrysone carboxyl ACP thioesterase from Aspergillus fumigatus (strain ATCC MYA-4609 / CBS 101355 / FGSC A1100 / Af293) (Neosartorya fumigata).